The primary structure comprises 195 residues: Adenylate kinase (195 aa).

Position 10-15 (10-15 (GAGKGT)) interacts with ATP. The NMP stretch occupies residues 30–59 (STGDMLRAAVAAGTPVGLKAKAVMDAGGLV). AMP contacts are provided by residues Thr-31, Arg-36, 57-59 (GLV), 85-88 (GFPR), and Gln-92. Positions 126-143 (NRAAEAQAKGEAVRKDDD) are LID. An ATP-binding site is contributed by Arg-127. An AMP-binding site is contributed by Arg-150. Ala-178 serves as a coordination point for ATP.

This sequence belongs to the adenylate kinase family. Monomer.

Its subcellular location is the cytoplasm. It carries out the reaction AMP + ATP = 2 ADP. The protein operates within purine metabolism; AMP biosynthesis via salvage pathway; AMP from ADP: step 1/1. Its function is as follows. Catalyzes the reversible transfer of the terminal phosphate group between ATP and AMP. Plays an important role in cellular energy homeostasis and in adenine nucleotide metabolism. This Xanthobacter autotrophicus (strain ATCC BAA-1158 / Py2) protein is Adenylate kinase.